The sequence spans 173 residues: Adenine phosphoribosyltransferase (173 aa).

Belongs to the purine/pyrimidine phosphoribosyltransferase family. In terms of assembly, homodimer.

It is found in the cytoplasm. It catalyses the reaction AMP + diphosphate = 5-phospho-alpha-D-ribose 1-diphosphate + adenine. It participates in purine metabolism; AMP biosynthesis via salvage pathway; AMP from adenine: step 1/1. Its function is as follows. Catalyzes a salvage reaction resulting in the formation of AMP, that is energically less costly than de novo synthesis. This is Adenine phosphoribosyltransferase from Listeria monocytogenes serovar 1/2a (strain ATCC BAA-679 / EGD-e).